A 918-amino-acid polypeptide reads, in one-letter code: MVTCVPASEQVGCAERDSQVYCEDTGGTEAVRVTDCGSPEDSGPQDEPSYCNSEDSGQLMASYEGKARGYQVPPFGWRICLAHEFAEKRRPFQANNISLSNLVKHLGMGLRYLKWWYRKTHVEKKTPFIDMLNSLPLRQIYGCPLGGIGGGTITRGWRGQFCRWQLNPGMYQHQTVIADQFIVCLRRDGRTVYQQVLSLELPNVLRSWNWGLCGYFAFYHALYPRAWTVYQLPGQNVTLTCRQVTPILPHDYQDSSLPVGVFVWDVENEGDETLDVSITFSMRNGLGGEDDAAGSLWNEPFRLEQGGTTVQGLLLHHPTPPNPYTMAVAARCTADTTVTHTTAFDPNGTGQQVWQDLLQDGQLDSPAGQSTPTQKGEGIAGAVCVSSKLLPRSRCCLEFSLAWDMPKIMFGAKSQVHYRRYTRFFGSDGDVAPALSHYALCHYADWEDRISAWQNPVLDDRTLPAWYKSALFNELYFLADGGTVWLEVPADSLPEGLGGSMRQLRSTLQDYGRFGYLEGQEYRMYNTYDVHFYASFALVMLWPKLELSLQYDMALATLKEDLTRRRYLMSGVVAPVKRRNVIPHDIGDPDDEPWLRVNAYLIHDTADWKDLNLKFVLQIYRDYYLTGDQGFLEDMWPVCLAVMESEMKFDKDQDGLIENGGYADQTYDAWVTTGPSAYCGGLWLAAVAVMVQMAVLCGAQDVQERFASILCRGREAYERLLWNGRYYNYDSSSHPQSRSIMSDQCAGQWFLRACGLGEGDTEVFPTLHVVRALQTIFELNVQAFAGGAMGAVNGMHPHGVPDRSSVQSDEVWVGVVYGLAATMIQEGLTWEGFRTAEGCYRTVWERLGLAFQTPEAYCQQQVFRSLAYMRPLSIWAMQLALQQQQHKKSRRPSVTQGTGLSTQPECGPKRSLANLNSE.

The interval 886–918 (HKKSRRPSVTQGTGLSTQPECGPKRSLANLNSE) is disordered. The span at 892–904 (PSVTQGTGLSTQP) shows a compositional bias: polar residues. Serine 893 bears the Phosphoserine mark.

The protein belongs to the non-lysosomal glucosylceramidase family. As to expression, widely expressed at low level. Highly expressed in testis and brain. Ubiquitously expressed in the brain (at protein level). Expressed by Sertoli cells (at protein level).

The protein resides in the endoplasmic reticulum membrane. The protein localises to the golgi apparatus membrane. It carries out the reaction a beta-D-glucosyl-(1&lt;-&gt;1')-N-acylsphing-4-enine + H2O = an N-acylsphing-4-enine + D-glucose. The catalysed reaction is a beta-D-galactosyl-(1&lt;-&gt;1')-N-acylsphing-4-enine + H2O = an N-acylsphing-4-enine + D-galactose. It catalyses the reaction beta-D-glucosyl-(1-&gt;3)-O-lithocholate + H2O = lithocholate + D-glucose. The enzyme catalyses beta-D-glucosyl-(1-&gt;3)-O-chenodeoxycholate + H2O = chenodeoxycholate + D-glucose. It carries out the reaction a di-trans,poly-cis-dolichyl beta-D-glucosyl phosphate + chenodeoxycholate = beta-D-glucosyl-(1-&gt;3)-O-chenodeoxycholate + a di-trans,poly-cis-dolichyl phosphate + H(+). The catalysed reaction is octyl beta-D-glucose + chenodeoxycholate = beta-D-glucosyl-(1-&gt;3)-O-chenodeoxycholate + octan-1-ol. It catalyses the reaction cholesteryl 3-beta-D-glucoside + H2O = cholesterol + D-glucose. The enzyme catalyses a beta-D-glucosyl-(1&lt;-&gt;1')-N-acylsphing-4-enine + cholesterol = cholesteryl 3-beta-D-glucoside + an N-acylsphing-4-enine. It carries out the reaction beta-D-glucosyl-N-(9Z-octadecenoyl)-sphing-4E-enine + cholesterol = N-(9Z-octadecenoyl)-sphing-4-enine + cholesteryl 3-beta-D-glucoside. The catalysed reaction is a beta-D-galactosyl-(1&lt;-&gt;1')-N-acylsphing-4-enine + cholesterol = cholesteryl 3-beta-D-galactoside + an N-acylsphing-4-enine. It catalyses the reaction 1-(beta-D-galactosyl)-N-dodecanoylsphing-4-enine + cholesterol = cholesteryl 3-beta-D-galactoside + N-dodecanoylsphing-4-enine. It functions in the pathway lipid metabolism; sphingolipid metabolism. Its pathway is steroid metabolism; cholesterol metabolism. Enzymatic activity is dependent on membrane association and requires the presence of lipids. Inhibited by N-(adamantanemethyloxypentyl)-deoxynojirimycin/AMP-DNM. Inhibited by its product sphingosine/N-acylsphing-4-enine in a feedback loop. Also inhibited by other non-acetylated sphingoid bases and their derivatives but not by sphingosine-1-phosphate and complex sphingolipids. In terms of biological role, non-lysosomal glucosylceramidase that catalyzes the hydrolysis of glucosylceramides/GlcCers (such as beta-D-glucosyl-(1&lt;-&gt;1')-N-acylsphing-4-enine) to free glucose and ceramides (such as N-acylsphing-4-enine). GlcCers are membrane glycosphingolipids that have a wide intracellular distribution. They are the main precursors of more complex glycosphingolipids that play a role in cellular growth, differentiation, adhesion, signaling, cytoskeletal dynamics and membrane properties. Also involved in the transglucosylation of cholesterol, transferring glucose from GlcCer, thereby modifying its water solubility and biological properties. Under specific conditions, may catalyze the reverse reaction, transferring glucose from cholesteryl-3-beta-D-glucoside to ceramide (such as N-acylsphing-4-enine). May play a role in the metabolism of bile acids. Able to hydrolyze bile acid 3-O-glucosides as well as to produce bile acid-glucose conjugates thanks to a bile acid glucosyl transferase activity. Catalyzes the hydrolysis of galactosylceramides/GalCers (such as beta-D-galactosyl-(1&lt;-&gt;1')-N-acylsphing-4-enine), as well as galactosyl transfer between GalCers and cholesterol in vitro with lower activity compared with their activity against GlcCers. The sequence is that of Non-lysosomal glucosylceramidase from Mus musculus (Mouse).